Reading from the N-terminus, the 188-residue chain is VQ motif-containing protein 18 (188 aa).

Disordered regions lie at residues 1 to 20, 58 to 92, and 157 to 188; these read MEIT…VSMN, LTGK…HQPV, and GFIF…HNSS. A VQ motif is present at residues 51–60; it reads FRSLVQSLTG. The segment covering 161–179 has biased composition (low complexity); it reads NNNNNNNNNNNNNNNNNTN.

The protein resides in the nucleus. Its function is as follows. May function as positive regulator of plant growth. In Arabidopsis thaliana (Mouse-ear cress), this protein is VQ motif-containing protein 18.